The following is a 218-amino-acid chain: Protein Nef (218 aa).

Residues 1 to 44 (MGGKWSKMAGWSTVRERMRRAEPARERMRRAEPRAEPAADGVGA) form a disordered region. The N-myristoyl glycine; by host moiety is linked to residue Gly2. Position 6 is a phosphoserine; by host (Ser6). The segment covering 14–37 (VRERMRRAEPARERMRRAEPRAEP) has biased composition (basic and acidic residues). The segment at 74–77 (EDEE) is acidic; interacts with host PACS1 and PACS2; stabilizes the interaction of NEF/MHC-I with host AP1M1; necessary for MHC-I internalization. The segment at 81 to 90 (PVKPQVPLRP) is SH3-binding; interaction with Src family tyrosine kinases. The PxxP; stabilizes the interaction of NEF/MHC-I with host AP1M1; necessary for MHC-I internalization motif lies at 84–87 (PQVP). The mediates dimerization, Nef-PTE1 interaction stretch occupies residues 120–136 (DILDLWVYHTQGYFPDW). Residues 160–192 (VEPEKIEEANEGENNSLLHPMSQHGMDDPEREV) form a binding to ATP6V1H region. The short motif at 176–177 (LL) is the Dileucine internalization motif; necessary for CD4 internalization element. The short motif at 186–187 (DD) is the Diacidic; necessary for CD4 internalization element.

Belongs to the lentivirus primate group Nef protein family. In terms of assembly, monomer; cytosolic form. Homodimer; membrane bound form. Interacts with Nef associated p21-activated kinase (PAK2); this interaction activates PAK2. Associates with the Nef-MHC-I-AP1 complex; this complex is required for MHC-I internalization. Interacts (via C-terminus) with host PI3-kinase. Interacts with host PACS1; this interaction seems to be weak. Interacts with host PACS2. Interacts with host LCK and MAPK3; these interactions inhibit the kinase activity of the latter. Interacts with host ATP6V1H; this interaction may play a role in CD4 endocytosis. Associates with the CD4-Nef-AP2 complex; this complex is required for CD4 internalization. Interacts with host AP2 subunit alpha and AP2 subunit sigma2. Interacts with TCR-zeta chain; this interaction up-regulates the Fas ligand (FasL) surface expression. Interacts with host HCK, LYN, and SRC; these interactions activate the Src family kinases. Interacts with MAP3K5; this interaction inhibits the Fas and TNFR-mediated death signals. Interacts with beta-COP and PTE1. Interacts with human RACK1; this increases Nef phosphorylation by PKC. Interacts with TP53; this interaction decreases the half-life of TP53, protecting the infected cell against p53-mediated apoptosis. In terms of processing, the virion-associated Nef proteins are cleaved by the viral protease to release the soluble C-terminal core protein. Nef is probably cleaved concomitantly with viral structural proteins on maturation of virus particles. Post-translationally, myristoylated. Phosphorylated on serine residues, probably by host PKCdelta and theta.

The protein localises to the host cell membrane. Its subcellular location is the virion. It is found in the secreted. The protein resides in the host Golgi apparatus membrane. Its function is as follows. Factor of infectivity and pathogenicity, required for optimal virus replication. Alters numerous pathways of T-lymphocyte function and down-regulates immunity surface molecules in order to evade host defense and increase viral infectivity. Alters the functionality of other immunity cells, like dendritic cells, monocytes/macrophages and NK cells. In terms of biological role, in infected CD4(+) T-lymphocytes, down-regulates the surface MHC-I, mature MHC-II, CD4, CD28, CCR5 and CXCR4 molecules. Mediates internalization and degradation of host CD4 through the interaction of with the cytoplasmic tail of CD4, the recruitment of AP-2 (clathrin adapter protein complex 2), internalization through clathrin coated pits, and subsequent transport to endosomes and lysosomes for degradation. Diverts host MHC-I molecules to the trans-Golgi network-associated endosomal compartments by an endocytic pathway to finally target them for degradation. MHC-I down-regulation may involve AP-1 (clathrin adapter protein complex 1) or possibly Src family kinase-ZAP70/Syk-PI3K cascade recruited by PACS2. In consequence infected cells are masked for immune recognition by cytotoxic T-lymphocytes. Decreasing the number of immune receptors also prevents reinfection by more HIV particles (superinfection). Down-regulates host SERINC3 and SERINC5 thereby excluding these proteins from the viral particles. Virion infectivity is drastically higher when SERINC3 or SERINC5 are excluded from the viral envelope, because these host antiviral proteins impair the membrane fusion event necessary for subsequent virion penetration. Bypasses host T-cell signaling by inducing a transcriptional program nearly identical to that of anti-CD3 cell activation. Interaction with TCR-zeta chain up-regulates the Fas ligand (FasL). Increasing surface FasL molecules and decreasing surface MHC-I molecules on infected CD4(+) cells send attacking cytotoxic CD8+ T-lymphocytes into apoptosis. Functionally, plays a role in optimizing the host cell environment for viral replication without causing cell death by apoptosis. Protects the infected cells from apoptosis in order to keep them alive until the next virus generation is ready to strike. Inhibits the Fas and TNFR-mediated death signals by blocking MAP3K5/ASK1. Decreases the half-life of TP53, protecting the infected cell against p53-mediated apoptosis. Inhibits the apoptotic signals regulated by the Bcl-2 family proteins through the formation of a Nef/PI3-kinase/PAK2 complex that leads to activation of PAK2 and induces phosphorylation of host BAD. Its function is as follows. Extracellular Nef protein targets CD4(+) T-lymphocytes for apoptosis by interacting with CXCR4 surface receptors. The sequence is that of Protein Nef from Homo sapiens (Human).